A 314-amino-acid polypeptide reads, in one-letter code: Regulator of microtubule dynamics protein 1 (314 aa).

Lysine 165 is subject to N6-succinyllysine. TPR repeat units follow at residues 168–204 (AICL…NPKD) and 222–258 (PWYQ…DPNF).

The protein belongs to the RMDN family. In terms of assembly, interacts with microtubules.

The protein resides in the cytoplasm. The protein localises to the cytoskeleton. It is found in the spindle. Its subcellular location is the spindle pole. The chain is Regulator of microtubule dynamics protein 1 (RMDN1) from Pongo abelii (Sumatran orangutan).